A 610-amino-acid polypeptide reads, in one-letter code: UvrABC system protein C (610 aa).

A GIY-YIG domain is found at 16–94 (SQPGVYRMYD…IKLYQPRYNV (79 aa)). Positions 204 to 239 (DQVLTQLIARMEKASQDLAFEEAARIRDQIQAVRRV) constitute a UVR domain.

Belongs to the UvrC family. Interacts with UvrB in an incision complex.

It localises to the cytoplasm. Functionally, the UvrABC repair system catalyzes the recognition and processing of DNA lesions. UvrC both incises the 5' and 3' sides of the lesion. The N-terminal half is responsible for the 3' incision and the C-terminal half is responsible for the 5' incision. This chain is UvrABC system protein C, found in Salmonella gallinarum (strain 287/91 / NCTC 13346).